The primary structure comprises 992 residues: RNA-binding protein 12 (992 aa).

Residues 304–379 (LYVSVHGMPF…RYVEVSPATE (76 aa)) enclose the RRM 1 domain. Phosphoserine occurs at positions 352 and 375. The interval 393–424 (QSMGPSGQAHPPPQTLPRSKSPSGQKRSRSRS) is disordered. Residues 408 to 417 (LPRSKSPSGQ) show a composition bias toward polar residues. Phosphoserine is present on residues Ser420, Ser422, and Ser424. The 78-residue stretch at 430–507 (FCVYLKGLPF…RFIQVHPITK (78 aa)) folds into the RRM 2 domain. Ser525 carries the post-translational modification Phosphoserine. The disordered stretch occupies residues 849–913 (FGGIPQNFGN…PGFGASSGKP (65 aa)). A compositionally biased stretch (low complexity) spans 876–887 (LGSVPGHLSGPP). One can recognise an RRM 3 domain in the interval 916 to 992 (TIIKVQNMPF…GSRKVKLVLG (77 aa)).

It localises to the nucleus. The protein is RNA-binding protein 12 (Rbm12) of Mus musculus (Mouse).